Here is a 154-residue protein sequence, read N- to C-terminus: MIEINIYYRKWYNIINKPKSFIKKIINTSLIDLNIYEYKPTISVVLANNRLLQKLNYEYRKKNKPTNVLSFPYNKLNKYCYLGEIFVSLDTLINESTDLNIPIEHHTSHMLIHGLLHILDYNHEEPLEQYIMESIEIKLLDKLGIKNPYVPRET.

Residues histidine 113, histidine 117, and histidine 123 each coordinate Zn(2+).

The protein belongs to the endoribonuclease YbeY family. The cofactor is Zn(2+).

The protein localises to the cytoplasm. In terms of biological role, single strand-specific metallo-endoribonuclease involved in late-stage 70S ribosome quality control and in maturation of the 3' terminus of the 16S rRNA. This chain is Endoribonuclease YbeY, found in Ehrlichia chaffeensis (strain ATCC CRL-10679 / Arkansas).